The chain runs to 1133 residues: Protein cordon-bleu (1133 aa).

The segment covering 1-11 (MKARAPPPPGK) has biased composition (pro residues). The disordered stretch occupies residues 1–25 (MKARAPPPPGKPAAQNVHSEQKLPH). A phosphoserine mark is found at Ser-31, Ser-34, Ser-196, Ser-219, Ser-256, and Ser-278. Disordered regions lie at residues 246–393 (AEHL…SVNG) and 442–568 (QGGI…GQAS). Over residues 272 to 301 (CVTTPNSPSLHSRSLTLGPSLSLGNISGMS) the composition is skewed to polar residues. A KKRRAP 1 motif is present at residues 307-312 (KKRRAP). A phosphoserine mark is found at Ser-330 and Ser-333. The KKRRAP 2 motif lies at 340-345 (KKRRAP). The span at 345–358 (PAPPPPQPPPPSPV) shows a compositional bias: pro residues. Ser-356 carries the phosphoserine modification. Basic and acidic residues predominate over residues 361 to 371 (NRKEDKEENRK). Composition is skewed to polar residues over residues 382–393 (TDTSSLTSSVNG) and 442–464 (QGGI…QPFI). Ser-447 carries the post-translational modification Phosphoserine. Over residues 512-524 (STDDPKAKDKDKM) the composition is skewed to basic and acidic residues. Residue Ser-614 is modified to Phosphoserine. Positions 664–720 (APSTTITATSEKPQRDETKAGFTLTTPEQQPASQEYGAPPEEDRSRPHSAVSCPVKV) are disordered. Composition is skewed to polar residues over residues 665-674 (PSTTITATSE) and 686-696 (TLTTPEQQPAS). Ser-924 is modified (phosphoserine). Disordered stretches follow at residues 942 to 961 (PSPL…SSIF) and 990 to 1018 (HTSG…YVEA). 2 WH2 domains span residues 981 to 1001 (LHSA…LRKT) and 1021 to 1041 (ERSA…LRKV). The span at 993–1010 (GGRDKLRKTAEQASEGRP) shows a compositional bias: basic and acidic residues. The tract at residues 1063–1091 (DKPQQEDRGLPPPPALPPPSTPASQVPSA) is disordered. Residues 1072 to 1083 (LPPPPALPPPST) show a composition bias toward pro residues. Ser-1099 carries the post-translational modification Phosphoserine. Positions 1109 to 1129 (ARQALMDAIRSGTGAARLRKV) constitute a WH2 3 domain.

Identified in a complex composed of ACTA1, COBL, GSN AND TMSB4X. Identified in a complex composed of COBL, PACSIN1 and WASL. Interacts with PACSIN1, PACSIN2 and PACSIN3. Interacts (via WH2 domains) with actin monomers. Interacts with both PACSIN1 and DBNL. Detected in brain (at protein level).

It localises to the cell membrane. It is found in the cytoplasm. The protein resides in the cytoskeleton. The protein localises to the cell projection. Its subcellular location is the ruffle. It localises to the cytosol. Functionally, plays an important role in the reorganization of the actin cytoskeleton. Binds to and sequesters actin monomers (G actin). Nucleates actin polymerization by assembling three actin monomers in cross-filament orientation and thereby promotes growth of actin filaments at the barbed end. Can also mediate actin depolymerization at barbed ends and severing of actin filaments. Promotes formation of cell ruffles. Regulates dendrite branching in Purkinje cells. Regulates neuron morphogenesis and increases branching of axons and dendrites. This Rattus norvegicus (Rat) protein is Protein cordon-bleu (Cobl).